We begin with the raw amino-acid sequence, 372 residues long: NAD(P)H-quinone oxidoreductase subunit 1 (372 aa).

9 helical membrane-spanning segments follow: residues 27–47, 65–85, 97–117, 128–148, 176–196, 204–224, 249–269, 308–328, and 351–371; these read TIWL…GVLV, PEYI…KLVF, WLFT…YLIV, LGIG…GLLM, LALA…IDIV, ILGW…IAAL, YAGM…VLSS, GLGL…AILL, and VGLV…FAFG.

Belongs to the complex I subunit 1 family. NDH-1 is composed of at least 11 different subunits.

Its subcellular location is the cellular thylakoid membrane. It carries out the reaction a plastoquinone + NADH + (n+1) H(+)(in) = a plastoquinol + NAD(+) + n H(+)(out). The enzyme catalyses a plastoquinone + NADPH + (n+1) H(+)(in) = a plastoquinol + NADP(+) + n H(+)(out). Functionally, NDH-1 shuttles electrons from an unknown electron donor, via FMN and iron-sulfur (Fe-S) centers, to quinones in the respiratory and/or the photosynthetic chain. The immediate electron acceptor for the enzyme in this species is believed to be plastoquinone. Couples the redox reaction to proton translocation, and thus conserves the redox energy in a proton gradient. In Acaryochloris marina (strain MBIC 11017), this protein is NAD(P)H-quinone oxidoreductase subunit 1.